The following is a 40-amino-acid chain: Serine proteinase-like BMK-CBP (40 aa).

Residues 1–40 (IFGGTFAKNGEYPWMVVIDLPEFACGGVLISKKFVLTAAH) enclose the Peptidase S1 domain. Catalysis depends on His40, which acts as the Charge relay system.

This sequence belongs to the peptidase S1 family. In terms of tissue distribution, expressed by the venom gland.

Its subcellular location is the secreted. Binds in a dose-dependent manner to the breast cancer cell line MCF-7. The sequence is that of Serine proteinase-like BMK-CBP from Olivierus martensii (Manchurian scorpion).